The chain runs to 467 residues: UDP-N-acetylmuramoylalanine--D-glutamate ligase (467 aa).

ATP is bound at residue 121–127 (GTNGKST).

This sequence belongs to the MurCDEF family.

Its subcellular location is the cytoplasm. The catalysed reaction is UDP-N-acetyl-alpha-D-muramoyl-L-alanine + D-glutamate + ATP = UDP-N-acetyl-alpha-D-muramoyl-L-alanyl-D-glutamate + ADP + phosphate + H(+). It participates in cell wall biogenesis; peptidoglycan biosynthesis. Cell wall formation. Catalyzes the addition of glutamate to the nucleotide precursor UDP-N-acetylmuramoyl-L-alanine (UMA). The protein is UDP-N-acetylmuramoylalanine--D-glutamate ligase of Chelativorans sp. (strain BNC1).